The primary structure comprises 427 residues: MNDAARLTTDDIPGLMIDIGRRARAAGRILALAPAAARNAALLAGAAALRAEAGAIALENAKDMSAGRAKGLTDALLDRLELTPARIEAMAKGLEDIAALPDPVGTVLAGWQRPNGLRIERVRVPIGVIGVIYESRPNVTADAGALCLKAGNAAILRGGSESFNSSRAIHRCLAAGLRAAGLPEDAIQSVPTPDRAAVGMLLTMTDFIDVIVPRGGKSLIERVSAESKVPLFKHLEGLCHTYIHAKADPQKALSVTVNAKMRRTGVCGSTETILVDRAIAATILPPLLDALAKAGCALRGDEETRAFSERVGPATAEDWDTEYLDAIVSIRVVADLDEALAHIAAHSSDHTDCILTEDAAAAERFLTEVDSAIVMHNASTQFADGGEFGMGAEIGISTGRLHARGPVGVEQLTIFKYKVRGTGQTRP.

It belongs to the gamma-glutamyl phosphate reductase family.

The protein localises to the cytoplasm. It catalyses the reaction L-glutamate 5-semialdehyde + phosphate + NADP(+) = L-glutamyl 5-phosphate + NADPH + H(+). The protein operates within amino-acid biosynthesis; L-proline biosynthesis; L-glutamate 5-semialdehyde from L-glutamate: step 2/2. Catalyzes the NADPH-dependent reduction of L-glutamate 5-phosphate into L-glutamate 5-semialdehyde and phosphate. The product spontaneously undergoes cyclization to form 1-pyrroline-5-carboxylate. The polypeptide is Gamma-glutamyl phosphate reductase (Rhodospirillum rubrum (strain ATCC 11170 / ATH 1.1.1 / DSM 467 / LMG 4362 / NCIMB 8255 / S1)).